The sequence spans 251 residues: 1-(5-phosphoribosyl)-5-[(5-phosphoribosylamino)methylideneamino] imidazole-4-carboxamide isomerase (251 aa).

The active-site Proton acceptor is the D8. D131 acts as the Proton donor in catalysis.

This sequence belongs to the HisA/HisF family.

It localises to the cytoplasm. It catalyses the reaction 1-(5-phospho-beta-D-ribosyl)-5-[(5-phospho-beta-D-ribosylamino)methylideneamino]imidazole-4-carboxamide = 5-[(5-phospho-1-deoxy-D-ribulos-1-ylimino)methylamino]-1-(5-phospho-beta-D-ribosyl)imidazole-4-carboxamide. It participates in amino-acid biosynthesis; L-histidine biosynthesis; L-histidine from 5-phospho-alpha-D-ribose 1-diphosphate: step 4/9. The polypeptide is 1-(5-phosphoribosyl)-5-[(5-phosphoribosylamino)methylideneamino] imidazole-4-carboxamide isomerase (Thiobacillus denitrificans (strain ATCC 25259 / T1)).